The chain runs to 234 residues: Opacity protein opA55 (234 aa).

Alanine 1 is a signal peptide.

This sequence belongs to the opacity porin family.

The protein resides in the cell outer membrane. Functionally, implicated in a number of adherence functions. OPA proteins are implicated in pathogenesis and are subject to phase variation. The polypeptide is Opacity protein opA55 (opaE) (Neisseria gonorrhoeae).